Here is a 234-residue protein sequence, read N- to C-terminus: Orotidine 5'-phosphate decarboxylase (234 aa).

Residues D14, K36, 63 to 72 (DLKFHDIPNT), T123, R184, Q193, G213, and R214 each bind substrate. K65 (proton donor) is an active-site residue.

The protein belongs to the OMP decarboxylase family. Type 1 subfamily. As to quaternary structure, homodimer.

It catalyses the reaction orotidine 5'-phosphate + H(+) = UMP + CO2. Its pathway is pyrimidine metabolism; UMP biosynthesis via de novo pathway; UMP from orotate: step 2/2. Functionally, catalyzes the decarboxylation of orotidine 5'-monophosphate (OMP) to uridine 5'-monophosphate (UMP). This chain is Orotidine 5'-phosphate decarboxylase, found in Pseudoalteromonas translucida (strain TAC 125).